Consider the following 262-residue polypeptide: Thiazole synthase (262 aa).

The active-site Schiff-base intermediate with DXP is Lys-98. 1-deoxy-D-xylulose 5-phosphate-binding positions include Gly-159, 186-187 (AG), and 208-209 (NT).

The protein belongs to the ThiG family. As to quaternary structure, homotetramer. Forms heterodimers with either ThiH or ThiS.

It is found in the cytoplasm. It carries out the reaction [ThiS sulfur-carrier protein]-C-terminal-Gly-aminoethanethioate + 2-iminoacetate + 1-deoxy-D-xylulose 5-phosphate = [ThiS sulfur-carrier protein]-C-terminal Gly-Gly + 2-[(2R,5Z)-2-carboxy-4-methylthiazol-5(2H)-ylidene]ethyl phosphate + 2 H2O + H(+). It functions in the pathway cofactor biosynthesis; thiamine diphosphate biosynthesis. Functionally, catalyzes the rearrangement of 1-deoxy-D-xylulose 5-phosphate (DXP) to produce the thiazole phosphate moiety of thiamine. Sulfur is provided by the thiocarboxylate moiety of the carrier protein ThiS. In vitro, sulfur can be provided by H(2)S. This is Thiazole synthase from Hahella chejuensis (strain KCTC 2396).